A 237-amino-acid chain; its full sequence is B3 domain-containing protein Os06g0194400 (237 aa).

Disordered regions lie at residues 1-23 (MIEA…RQVE) and 38-82 (SAAV…LPEK). Residues 139–230 (FVKPMLQSHV…KFKVYIIRAS (92 aa)) constitute a DNA-binding region (TF-B3).

It is found in the nucleus. This Oryza sativa subsp. japonica (Rice) protein is B3 domain-containing protein Os06g0194400.